A 203-amino-acid chain; its full sequence is LexA repressor (203 aa).

The H-T-H motif DNA-binding region spans 28-48; sequence VRELCDELGFKSPNTAHFHLK. Catalysis depends on for autocatalytic cleavage activity residues Ser-122 and Lys-159.

It belongs to the peptidase S24 family. As to quaternary structure, homodimer.

The catalysed reaction is Hydrolysis of Ala-|-Gly bond in repressor LexA.. Represses a number of genes involved in the response to DNA damage (SOS response), including recA and lexA. In the presence of single-stranded DNA, RecA interacts with LexA causing an autocatalytic cleavage which disrupts the DNA-binding part of LexA, leading to derepression of the SOS regulon and eventually DNA repair. The chain is LexA repressor from Desulfatibacillum aliphaticivorans.